A 263-amino-acid chain; its full sequence is Endonuclease 8 (263 aa).

Residue Pro2 is the Schiff-base intermediate with DNA of the active site. Residue Glu3 is the Proton donor of the active site. Catalysis depends on Lys53, which acts as the Proton donor; for beta-elimination activity. Residues Gln70, Arg125, and Asn169 each contribute to the DNA site. The FPG-type zinc finger occupies 229-263 (KVFHRDGEPCERCGSIIEKTTLSSRPFYWCPGCQH). Residue Arg253 is the Proton donor; for delta-elimination activity of the active site.

The protein belongs to the FPG family. Zn(2+) serves as cofactor.

It carries out the reaction 2'-deoxyribonucleotide-(2'-deoxyribose 5'-phosphate)-2'-deoxyribonucleotide-DNA = a 3'-end 2'-deoxyribonucleotide-(2,3-dehydro-2,3-deoxyribose 5'-phosphate)-DNA + a 5'-end 5'-phospho-2'-deoxyribonucleoside-DNA + H(+). Involved in base excision repair of DNA damaged by oxidation or by mutagenic agents. Acts as a DNA glycosylase that recognizes and removes damaged bases. Has a preference for oxidized pyrimidines, such as thymine glycol, 5,6-dihydrouracil and 5,6-dihydrothymine. Has AP (apurinic/apyrimidinic) lyase activity and introduces nicks in the DNA strand. Cleaves the DNA backbone by beta-delta elimination to generate a single-strand break at the site of the removed base with both 3'- and 5'-phosphates. The protein is Endonuclease 8 of Escherichia coli O17:K52:H18 (strain UMN026 / ExPEC).